Consider the following 586-residue polypeptide: Protein BONZAI 2 (586 aa).

Gly2 carries N-myristoyl glycine lipidation. 2 consecutive C2 domains span residues 25-164 and 176-303; these read SAAT…ALEL and PQHN…NLAL. Residues Asp62, Asp68, Asp121, and Asp123 each coordinate Ca(2+). A VWFA domain is found at 344-563; it reads NFMVAIDFTA…SVVEALLAEL (220 aa).

This sequence belongs to the copine family. In terms of assembly, interacts with BAP1 and BAP2. Ca(2+) is required as a cofactor. Expressed in roots, leaves and stems. Expressed in young growing tissues.

The protein resides in the cell membrane. Functionally, negative regulator of cell death and defense responses. May repress a number of R genes and may have effects in promoting growth and development. May function in membrane trafficking and in fusion of vesicles with plasma membrane. The polypeptide is Protein BONZAI 2 (BON2) (Arabidopsis thaliana (Mouse-ear cress)).